A 509-amino-acid polypeptide reads, in one-letter code: Poly(A) RNA polymerase GLD2-A (509 aa).

Positions 88-107 (PGSPSSSFQNRKRRSDEGNV) are disordered. 2 residues coordinate Mg(2+): D240 and D242. Residues 409–462 (LGDLLLGFLKYFAVEFDWSKDIISVREGKALPRSDDYLWRNKYICVEEPFDGTN) enclose the PAP-associated domain.

It belongs to the DNA polymerase type-B-like family. GLD2 subfamily. Component of a complex at least composed of cpeb1, cpsf1, tent2/gld2, pabpc1/ePAB, parn and sympk. Following oocyte maturation, parn is expelled from the complex. Interacts with rbfox2 and sympk. Mg(2+) is required as a cofactor. Mn(2+) serves as cofactor.

The protein resides in the cytoplasm. The enzyme catalyses RNA(n) + ATP = RNA(n)-3'-adenine ribonucleotide + diphosphate. Cytoplasmic poly(A) RNA polymerase that adds successive AMP monomers to the 3'-end of specific RNAs, forming a poly(A) tail. In contrast to the canonical nuclear poly(A) RNA polymerase, it only adds poly(A) to selected cytoplasmic mRNAs during oocyte maturation. Plays a central role during oocyte maturation by mediating polyadenylation of dormant mRNAs, which contain 5'AAUAAA-3' sequence in their 3'UTR. In immature oocytes, polyadenylation of poly(A) tails is counteracted by the ribonuclease parn. During maturation parn is excluded from the ribonucleoprotein complex, allowing poly(A) elongation and activation of mRNAs. May not play a role in replication-dependent histone mRNA degradation. This Xenopus laevis (African clawed frog) protein is Poly(A) RNA polymerase GLD2-A (tent2-a).